A 445-amino-acid chain; its full sequence is D-serine dehydratase (445 aa).

N6-(pyridoxal phosphate)lysine is present on Lys118.

This sequence belongs to the serine/threonine dehydratase family. DsdA subfamily. As to quaternary structure, monomer. Requires pyridoxal 5'-phosphate as cofactor.

It catalyses the reaction D-serine = pyruvate + NH4(+). This Serratia proteamaculans (strain 568) protein is D-serine dehydratase.